The chain runs to 61 residues: Large ribosomal subunit protein uL30 (61 aa).

Belongs to the universal ribosomal protein uL30 family. As to quaternary structure, part of the 50S ribosomal subunit.

The polypeptide is Large ribosomal subunit protein uL30 (Rhizorhabdus wittichii (strain DSM 6014 / CCUG 31198 / JCM 15750 / NBRC 105917 / EY 4224 / RW1) (Sphingomonas wittichii)).